The primary structure comprises 532 residues: Vesicular acetylcholine transporter (532 aa).

The Cytoplasmic segment spans residues 1–33 (MESAEPAGQARAAATKLSEAVGAALQEPRRQRR). The chain crosses the membrane as a helical span at residues 34–54 (LVLVIVCVALLLDNMLYMVIV). The Lumenal, vesicle segment spans residues 55-125 (PIVPDYIAHM…PTESEDVKIG (71 aa)). N-linked (GlcNAc...) asparagine glycans are attached at residues asparagine 89 and asparagine 96. The chain crosses the membrane as a helical span at residues 126 to 146 (VLFASKAILQLLVNPLSGPFI). Residues 147–152 (DRMSYD) are Cytoplasmic-facing. A helical membrane pass occupies residues 153–173 (VPLLIGLGVMFASTVLFAFAE). The Lumenal, vesicle segment spans residues 174-182 (DYATLFAAR). A helical membrane pass occupies residues 183-203 (SLQGLGSAFADTSGIAMIADK). Residues 204 to 213 (YPEEPERSRA) are Cytoplasmic-facing. Residues 214–234 (LGVALAFISFGSLVAPPFGGI) form a helical membrane-spanning segment. Over 235–242 (LYEFAGKR) the chain is Lumenal, vesicle. Residues 243 to 263 (VPFLVLAAVSLFDALLLLAVA) traverse the membrane as a helical segment. At 264–289 (KPFSAAARARANLPVGTPIHRLMLDP) the chain is on the cytoplasmic side. A helical transmembrane segment spans residues 290–310 (YIAVVAGALTTCNIPLAFLEP). Residues 311 to 325 (TIATWMKHTMAASEW) are Lumenal, vesicle-facing. Residues 326 to 346 (EMGMAWLPAFVPHVLGVYLTV) form a helical membrane-spanning segment. Residues 347–356 (RLAARYPHLQ) lie on the Cytoplasmic side of the membrane. The helical transmembrane segment at 357–377 (WLYGALGLAVIGASSCIVPAC) threads the bilayer. Residues 378–388 (RSFAPLVVSLC) are Lumenal, vesicle-facing. Residues 389–409 (GLCFGIALVDTALLPTLAFLV) traverse the membrane as a helical segment. The Cytoplasmic portion of the chain corresponds to 410 to 422 (DVRHVSVYGSVYA). A helical membrane pass occupies residues 423–443 (IADISYSVAYALGPIVAGHIV). At 444 to 447 (HSLG) the chain is on the lumenal, vesicle side. Residues 448–468 (FEQLSLGMGLANLLYAPVLLL) traverse the membrane as a helical segment. Residues 469–532 (LRNVGLLTRS…DDYNYYYTRS (64 aa)) lie on the Cytoplasmic side of the membrane. The interval 471-532 (NVGLLTRSRS…DDYNYYYTRS (62 aa)) is mediates interaction with SEC14L1. Residues 502 to 523 (RPVSGQDGEPRSPPGPFDACED) are disordered.

Belongs to the major facilitator superfamily. Vesicular transporter family. In terms of assembly, interacts with SEC14L1. In terms of tissue distribution, peripheral and central cholinergic nervous systems.

Its subcellular location is the cytoplasmic vesicle. The protein resides in the secretory vesicle. The protein localises to the synaptic vesicle membrane. It carries out the reaction acetylcholine(out) + 2 H(+)(in) = acetylcholine(in) + 2 H(+)(out). The enzyme catalyses choline(in) + 2 H(+)(out) = choline(out) + 2 H(+)(in). It catalyses the reaction serotonin(in) + 2 H(+)(out) = serotonin(out) + 2 H(+)(in). Its activity is regulated as follows. Potently inhibited by L-vesamicol, reserpine and tetrabenazine. Its function is as follows. Electrogenic antiporter that exchanges one cholinergic neurotransmitter, acetylcholine or choline, with two intravesicular protons across the membrane of synaptic vesicles. Uses the electrochemical proton gradient established by the V-type proton-pump ATPase to store neurotransmitters inside the vesicles prior to their release via exocytosis. Determines cholinergic vesicular quantal size at presynaptic nerve terminals in developing neuro-muscular junctions with an impact on motor neuron differentiation and innervation pattern. Part of forebrain cholinergic system, regulates hippocampal synapse transmissions that underlie spatial memory formation. Can transport serotonin. The sequence is that of Vesicular acetylcholine transporter (SLC18A3) from Homo sapiens (Human).